Here is a 131-residue protein sequence, read N- to C-terminus: Acyl carrier protein 3, mitochondrial (131 aa).

Residues 1–39 constitute a mitochondrion transit peptide; the sequence is MHCIRSSILQHLRLRVSVRPTSLLQNENGFKSIGIFNFT. In terms of domain architecture, Carrier spans 49–124; sequence DQILSRVIEL…DVATYILSET (76 aa). Ser84 carries the O-(pantetheine 4'-phosphoryl)serine modification.

The protein belongs to the acyl carrier protein (ACP) family. As to quaternary structure, complex I is composed of at least 49 different subunits. 4'-phosphopantetheine is transferred from CoA to a specific serine of the apo-ACP-like protein.

The protein resides in the mitochondrion. Its pathway is lipid metabolism; fatty acid biosynthesis. Carrier of the growing fatty acid chain in fatty acid biosynthesis. May be involved in the synthesis of short and medium chain fatty acids. Accessory and non-catalytic subunit of the mitochondrial membrane respiratory chain NADH dehydrogenase (Complex I), which functions in the transfer of electrons from NADH to the respiratory chain. The polypeptide is Acyl carrier protein 3, mitochondrial (MTACP2) (Arabidopsis thaliana (Mouse-ear cress)).